The primary structure comprises 256 residues: D-aminoacyl-tRNA deacylase (256 aa).

This sequence belongs to the DtdA deacylase family. Monomer. It depends on Zn(2+) as a cofactor.

The enzyme catalyses a D-aminoacyl-tRNA + H2O = a tRNA + a D-alpha-amino acid + H(+). The catalysed reaction is glycyl-tRNA(Ala) + H2O = tRNA(Ala) + glycine + H(+). D-aminoacyl-tRNA deacylase with broad substrate specificity. By recycling D-aminoacyl-tRNA to D-amino acids and free tRNA molecules, this enzyme counteracts the toxicity associated with the formation of D-aminoacyl-tRNA entities in vivo. This is D-aminoacyl-tRNA deacylase from Thermoplasma acidophilum (strain ATCC 25905 / DSM 1728 / JCM 9062 / NBRC 15155 / AMRC-C165).